Reading from the N-terminus, the 832-residue chain is WD repeat-containing protein 75 (832 aa).

WD repeat units lie at residues 4-43, 47-86, 90-134, 148-187, 196-233, 239-278, 281-320, 326-364, 378-425, 432-474, 485-523, 527-567, and 572-609; these read KTDI…KVYS, EEWL…KLWD, GILI…QLVA, KELS…YFFR, LKAT…RLWR, KEYT…VQWQ, DMSK…SIIE, SGLI…QFYS, QQEY…KLWA, SFVL…KAWC, YWSC…TLWS, WELL…CCWN, and ALEW…FVFK. 2 disordered regions span residues 704–723 and 759–811; these read QHKL…HTQG and VREE…AQER. Residues 764–785 are compositionally biased toward acidic residues; sequence DSSEQEMDSEKEEEESEEEMEA. Residues 799-811 are compositionally biased toward basic and acidic residues; sequence DEQKPKLSKAQER.

As to quaternary structure, component of the proposed t-UTP subcomplex of the ribosomal small subunit (SSU) processome. SSU processome is composed of more than 70 proteins and the RNA chaperone small nucleolar RNA (snoRNA) U3.

The protein resides in the nucleus. Its subcellular location is the nucleolus. In terms of biological role, ribosome biogenesis factor. Part of the small subunit (SSU) processome, first precursor of the small eukaryotic ribosomal subunit. During the assembly of the SSU processome in the nucleolus, many ribosome biogenesis factors, an RNA chaperone and ribosomal proteins associate with the nascent pre-rRNA and work in concert to generate RNA folding, modifications, rearrangements and cleavage as well as targeted degradation of pre-ribosomal RNA by the RNA exosome. Involved in nucleolar processing of pre-18S ribosomal RNA. Required for optimal pre-ribosomal RNA transcription by RNA polymerase I. This Danio rerio (Zebrafish) protein is WD repeat-containing protein 75 (wdr75).